The following is a 387-amino-acid chain: Synaptotagmin-8 (387 aa).

At 1–34 (MGHPPVSPSAPAPAGTTAIPGLIPDLVAGTPWPR) the chain is on the extracellular side. Residues 35–55 (WALIAGALAAGVLLVSCLLCA) form a helical; Signal-anchor for type III membrane protein membrane-spanning segment. Residues 56 to 387 (ACCCCRRHRK…LRLRLPLPHS (332 aa)) are Cytoplasmic-facing. The disordered stretch occupies residues 70-99 (KESVGLGSARGTTTTHLVQPDVDGLESSPG). C2 domains are found at residues 103–219 (QWGC…EHWY) and 231–346 (QVGE…QHWA).

The protein belongs to the synaptotagmin family. As to quaternary structure, homodimer or homooligomer. Homodimerization and homooligomerization do not depend on Ca(2+). Interacts with SYNCRIP isoform 2 C-terminus. Binds inositol 1,3,4,5-tetrakisphosphate (IP4). Binds to AP2 in a Ca(2+)-independent manner. Interacts with STX1A, STX1B and STX2; the interaction is Ca(2+)-dependent.

The protein resides in the cell membrane. It is found in the cytoplasmic vesicle. It localises to the secretory vesicle. Its subcellular location is the acrosome. Its function is as follows. Involved in the trafficking and exocytosis of secretory vesicles in non-neuronal tissues. Mediates Ca(2+)-regulation of exocytosis acrosomal reaction in sperm. May mediate Ca(2+)-regulation of exocytosis in insulin secreted cells. The chain is Synaptotagmin-8 (SYT8) from Homo sapiens (Human).